The sequence spans 101 residues: Small ribosomal subunit protein uS14 (101 aa).

The segment at 33 to 69 (SQDASYEEKIDASTKLQKLPRDSSPSRHRNRCELSGR) is disordered. Basic and acidic residues predominate over residues 51-68 (LPRDSSPSRHRNRCELSG).

It belongs to the universal ribosomal protein uS14 family. Part of the 30S ribosomal subunit. Contacts proteins S3 and S10.

Binds 16S rRNA, required for the assembly of 30S particles and may also be responsible for determining the conformation of the 16S rRNA at the A site. This chain is Small ribosomal subunit protein uS14, found in Xanthomonas axonopodis pv. citri (strain 306).